The chain runs to 256 residues: Gramicidin S biosynthesis protein GrsT (256 aa).

Residue S95 is part of the active site.

Belongs to the thioesterase family.

It participates in antibiotic biosynthesis; gramicidin S biosynthesis. Probable thioesterase involved in the biosynthesis of gramicidin S. The sequence is that of Gramicidin S biosynthesis protein GrsT (grsT) from Aneurinibacillus migulanus (Bacillus migulanus).